The sequence spans 918 residues: Chaperone protein ClpC4, chloroplastic (918 aa).

The interval 266–515 (LMEYGTNLTK…RLRNAQCKPS (250 aa)) is i. Residues 311–318 (GEPGVGKT) and 653–660 (GPTGVGKS) contribute to the ATP site. The interval 579 to 774 (VTEDDVRHAI…LIVMTTNIGS (196 aa)) is II.

It belongs to the ClpA/ClpB family. ClpC subfamily.

The protein localises to the plastid. Its subcellular location is the chloroplast. In terms of biological role, molecular chaperone that may interact with a ClpP-like protease involved in degradation of denatured proteins in the chloroplast. The sequence is that of Chaperone protein ClpC4, chloroplastic (CPLC4) from Oryza sativa subsp. japonica (Rice).